Consider the following 709-residue polypeptide: D-(-)-3-hydroxybutyrate oligomer hydrolase (709 aa).

The signal sequence occupies residues 1–26 (MTVFKTAPLLIAALAASSCGGGGSGA). The interval 58–77 (GLGRSGLQDDSPPGYAGSQP) is disordered. S305 serves as the catalytic Charge relay system.

The protein belongs to the D-(-)-3-hydroxybutyrate oligomer hydrolase family.

Its subcellular location is the secreted. The catalysed reaction is (3R)-hydroxybutanoate dimer + H2O = 2 (R)-3-hydroxybutanoate + H(+). The protein operates within lipid metabolism; butanoate metabolism. In terms of biological role, participates in the degradation of poly-3-hydroxybutyrate (PHB). It works downstream of poly(3-hydroxybutyrate) depolymerase, hydrolyzing D(-)-3-hydroxybutyrate oligomers of various length (3HB-oligomers) into 3HB-monomers. This Paracidovorax citrulli (strain AAC00-1) (Acidovorax citrulli) protein is D-(-)-3-hydroxybutyrate oligomer hydrolase.